The following is a 219-amino-acid chain: Elongation factor Ts, chloroplastic (219 aa).

It belongs to the EF-Ts family.

The protein resides in the plastid. The protein localises to the chloroplast. Its function is as follows. Associates with the EF-Tu.GDP complex and induces the exchange of GDP to GTP. It remains bound to the aminoacyl-tRNA.EF-Tu.GTP complex up to the GTP hydrolysis stage on the ribosome. The polypeptide is Elongation factor Ts, chloroplastic (tsf) (Rhodomonas salina (Cryptomonas salina)).